The following is a 1463-amino-acid chain: Regulating synaptic membrane exocytosis protein 1 (1463 aa).

Residues 1-26 (MSSAVGPRGPRPPTVPPPMQELPDLS) form a disordered region. Over residues 9 to 20 (GPRPPTVPPPMQ) the composition is skewed to pro residues. The region spanning 22–205 (LPDLSHLTEE…TKSGAWFFGS (184 aa)) is the RabBD domain. An FYVE-type zinc finger spans residues 133–193 (KDDAPTCGIC…VCNLCRKQQE (61 aa)). Residues Cys139, Cys142, Cys155, Cys158, Cys163, Cys166, Cys185, and Cys188 each contribute to the Zn(2+) site. Residues 205-393 (SGPQQPSQDG…DVELESESVS (189 aa)) are disordered. The span at 206–222 (GPQQPSQDGTLSDTATG) shows a compositional bias: polar residues. Residues 227 to 240 (VPREKKARLQERSR) show a composition bias toward basic and acidic residues. The span at 241–256 (SQTPLSTAAVSSQDTA) shows a compositional bias: polar residues. The span at 327–372 (ADERERKERRETRRLEKGRSQDYPDRLEKREDGRVAEDEKQRKEEE) shows a compositional bias: basic and acidic residues. Positions 381 to 391 (SCEDVELESES) are enriched in acidic residues. Phosphoserine is present on Ser413. One can recognise a PDZ domain in the interval 440-526 (RTTMPKESGA…EPQVEIIVSR (87 aa)). The segment at 533-567 (RIPESSHPPLESSSSSFESQKMERPSISVISPTSP) is disordered. Residues 535 to 551 (PESSHPPLESSSSSFES) are compositionally biased toward low complexity. Phosphoserine occurs at positions 563 and 566. Residues 577 to 700 (LPGQLSVKLW…ALLDDEPHWY (124 aa)) form the C2 1 domain. The interval 705 to 856 (HDESSLPLPQ…YSSEPDSELL (152 aa)) is disordered. Residue Ser716 is modified to Phosphoserine. Positions 770–779 (ATTLTVPEQQ) are enriched in polar residues. At Ser812 the chain carries Phosphoserine. A compositionally biased stretch (basic and acidic residues) spans 827–844 (RHHDASRSLADHRSRHAE). Ser866 bears the Phosphoserine mark. The segment at 874–1049 (SELQPSLDRA…RQLPQVPVRS (176 aa)) is disordered. A compositionally biased stretch (basic and acidic residues) spans 928-941 (PENDRHSRKSERSS). Residues 1021–1035 (QGSPTQSPPADTSFG) are compositionally biased toward polar residues. The residue at position 1023 (Ser1023) is a Phosphoserine. A Phosphothreonine modification is found at Thr1025. Phosphoserine is present on residues Ser1027, Ser1079, Ser1081, Ser1082, Ser1110, Ser1111, and Ser1113. A disordered region spans residues 1104-1161 (DNASAKSSDSDVSDVSAISRASSTSRLSSTSFMSEQSERPRGRISSFTPKMQGRRMGT). Residues 1116–1137 (SDVSAISRASSTSRLSSTSFMS) are compositionally biased toward low complexity. Ser1187 carries the post-translational modification Phosphoserine. The disordered stretch occupies residues 1216-1266 (RSRSTSQLSQTESGHKKLKSTIQRSTETGMAAEMRKMVRQPSRESTDGSIN). Residues 1248-1261 (EMRKMVRQPSREST) are compositionally biased toward basic and acidic residues. Residues 1309 to 1427 (AMGDIQIGME…DLSSMVIGWY (119 aa)) form the C2 2 domain. A phosphoserine mark is found at Ser1448, Ser1451, Ser1454, and Ser1463.

In terms of assembly, binds SNAP25, SYT1 and CACNA1B. Interaction with SYT1 is enhanced by calcium ions. Interaction with SNAP25 is weaker in the presence of calcium ions. Interacts with TSPOAP1 and RIMBP2; interacts with PPFIA3 and PPFIA4. Interacts with ERC1. Interacts with RAB3A, RAB3B and RAB3D that have been activated by GTP-binding. Interacts with RAB3C, RAB10, RAB26 and RAB37. Binds UNC13A. In terms of processing, phosphorylated by BRSK1.

It is found in the cell membrane. The protein resides in the synapse. It localises to the presynaptic cell membrane. Functionally, rab effector involved in exocytosis. May act as scaffold protein that regulates neurotransmitter release at the active zone. Essential for maintaining normal probability of neurotransmitter release and for regulating release during short-term synaptic plasticity. Plays a role in dendrite formation by melanocytes. This chain is Regulating synaptic membrane exocytosis protein 1 (Rims1), found in Mus musculus (Mouse).